The chain runs to 172 residues: MARPLGRVAALLLGLLMECTEAKKHCWYFEGLYPTYYICRSYEDCCGSRCCVRALSIQRLWYFWFLLMMGVLFCCGAGFFIRRRMYPPPLIEEPTFNVSYTRQPPNPAPGAQQMGPPYYTDPGGPGMNPVGNTMAMAFQVQPNSPHGGTTYPPPPSYCNTPPPPYEQVVKDK.

The signal sequence occupies residues Met1 to Ala22. Over Lys23–Leu60 the chain is Extracellular. Residues Trp61–Ile81 traverse the membrane as a helical segment. Residues Arg82–Lys172 are Cytoplasmic-facing. A disordered region spans residues Gln139 to Lys172. Residues Tyr151–Tyr165 show a composition bias toward pro residues.

This sequence belongs to the VOPP1/ECOP family. In terms of assembly, interacts with WWOX (via WW domain).

Its subcellular location is the cytoplasmic vesicle membrane. The protein localises to the late endosome membrane. It localises to the lysosome membrane. Functionally, increases the transcriptional activity of NFKB1 by facilitating its nuclear translocation, DNA-binding and associated apoptotic response, when overexpressed. May sequester WWOX in lysosomal vesicles and thereby regulate WWOX role as tumor suppressor. The sequence is that of WW domain binding protein VOPP1 from Rattus norvegicus (Rat).